A 152-amino-acid chain; its full sequence is MKIEIVVIGKLKEYIRPAVKEYIKMLSSFAEIKLTQIKHAKGYKDFDKSLKKEAEGIISQLKESDYVILLDQSGRSCDSISFANHFHQLIQINSSIVFVIGGPFGVDESLKKRANELLSLSDLTFTHQLAVVILLEQLFRAFKIINNQKYHY.

S-adenosyl-L-methionine contacts are provided by residues Leu-70, Gly-101, and 120 to 125 (LSDLTF).

Belongs to the RNA methyltransferase RlmH family. Homodimer.

The protein resides in the cytoplasm. The enzyme catalyses pseudouridine(1915) in 23S rRNA + S-adenosyl-L-methionine = N(3)-methylpseudouridine(1915) in 23S rRNA + S-adenosyl-L-homocysteine + H(+). Its function is as follows. Specifically methylates the pseudouridine at position 1915 (m3Psi1915) in 23S rRNA. This Pseudothermotoga lettingae (strain ATCC BAA-301 / DSM 14385 / NBRC 107922 / TMO) (Thermotoga lettingae) protein is Ribosomal RNA large subunit methyltransferase H.